Here is a 673-residue protein sequence, read N- to C-terminus: UPF0313 protein blr7973 (673 aa).

In terms of domain architecture, Radical SAM core spans 332-611 (AWDMIKFSVT…KAFLRYHDPD (280 aa)). [4Fe-4S] cluster is bound by residues cysteine 346, cysteine 350, and cysteine 353. The segment at 632 to 673 (RPDQLVPAHQPPGTGKAAGTRRPVRPGGKTQRFTTKGLRVMK) is disordered.

It belongs to the UPF0313 family. [4Fe-4S] cluster serves as cofactor.

The polypeptide is UPF0313 protein blr7973 (Bradyrhizobium diazoefficiens (strain JCM 10833 / BCRC 13528 / IAM 13628 / NBRC 14792 / USDA 110)).